Consider the following 430-residue polypeptide: MEWKLEQSMREQALLKAQLTQLKESLKEVQLERDEYAEHLKGERARWQQRMRKMSQEVCSLKKEKKHDKYRVEKLERSLSKLKNQMAEPLPPEPPAVPSEVELQHLRKELERVAGALQAQVEYNQRISLLNEGQKERLREQEERLQEQQERLPEQEERLQQLAEPQNSFKELNNENKSVLQLEQQVKELQEKLGKERLEAASQQKQQLTAQLSLMALPGEGHGGEHLDSEGEEAPRPMPSVPEDLESREAMSGFMDHLEEKADLSELVEKEELGFFQYYRERCHQKVYHPITKPGGSAKDAAPGGGHHQAGPGQGGDEGEAAGAAGDGVAAGGDYKGHSKFLVTAQNPAHEPSPGAPAPQELGAAHKHGDLCEVSLTDSVEPVQGEAREGSPHDNPTAQPIVQDHQEHPGLGSNCCVPFFCWAWLPRRRR.

A coiled-coil region spans residues 2 to 217 (EWKLEQSMRE…LTAQLSLMAL (216 aa)). Disordered regions lie at residues 138-158 (LREQ…QEER), 217-239 (LPGE…RPMP), 290-331 (PITK…GVAA), and 382-406 (PVQG…QDHQ). Positions 222 to 235 (HGGEHLDSEGEEAP) are enriched in basic and acidic residues. The span at 303–316 (PGGGHHQAGPGQGG) shows a compositional bias: gly residues.

The protein belongs to the GOLGA8 family.

This is Putative golgin subfamily A member 8D (GOLGA8DP) from Homo sapiens (Human).